We begin with the raw amino-acid sequence, 189 residues long: Ribosome maturation factor RimM (189 aa).

A PRC barrel domain is found at 110–189 (DDEYYWKDLI…TVTVDWDPNF (80 aa)).

It belongs to the RimM family. As to quaternary structure, binds ribosomal protein uS19.

It is found in the cytoplasm. In terms of biological role, an accessory protein needed during the final step in the assembly of 30S ribosomal subunit, possibly for assembly of the head region. Essential for efficient processing of 16S rRNA. May be needed both before and after RbfA during the maturation of 16S rRNA. It has affinity for free ribosomal 30S subunits but not for 70S ribosomes. This chain is Ribosome maturation factor RimM, found in Blochmanniella pennsylvanica (strain BPEN).